A 468-amino-acid chain; its full sequence is Purple acid phosphatase 10 (468 aa).

Positions 1–25 are cleaved as a signal peptide; sequence MGRVRKSDFGSIVLVLCCVLNSLLC. N-linked (GlcNAc...) asparagine glycosylation is found at Asn-95 and Asn-113. A Fe cation-binding site is contributed by Asp-167. Residue Asn-175 is glycosylated (N-linked (GlcNAc...) asparagine). Asp-196 and Tyr-199 together coordinate Fe cation. Asp-196 lines the Zn(2+) pocket. A Zn(2+)-binding site is contributed by Asn-233. A substrate-binding site is contributed by Asn-233. An N-linked (GlcNAc...) asparagine glycan is attached at Asn-306. Zn(2+) is bound at residue His-318. His-328 (proton donor) is an active-site residue. His-355 is a binding site for Zn(2+). 355 to 357 is a substrate binding site; it reads HVH. His-357 contacts Fe cation. N-linked (GlcNAc...) asparagine glycosylation occurs at Asn-428.

Belongs to the metallophosphoesterase superfamily. Purple acid phosphatase family. In terms of assembly, homodimer; disulfide-linked. Fe cation serves as cofactor. Requires Zn(2+) as cofactor. Expressed in roots, stems, leaves, flowers and siliques.

Its subcellular location is the secreted. The protein localises to the cytoplasm. The catalysed reaction is a phosphate monoester + H2O = an alcohol + phosphate. The polypeptide is Purple acid phosphatase 10 (PAP10) (Arabidopsis thaliana (Mouse-ear cress)).